The primary structure comprises 139 residues: AP-4 complex subunit sigma (139 aa).

This sequence belongs to the adaptor complexes small subunit family. May be part of the adaptor protein complex 4 (AP-4), a heterotetramer composed of two large adaptins (epsilon-type subunitand beta-type subunit), a medium adaptin (mu-type subunit) and a small adaptin (sigma-type).

It is found in the golgi apparatus. Its subcellular location is the trans-Golgi network membrane. In terms of biological role, probable component of an adaptor protein complex. Adaptor protein complexes are vesicle coat components involved both in vesicle formation and cargo selection. They control the vesicular transport of proteins in different trafficking pathways. This Dictyostelium discoideum (Social amoeba) protein is AP-4 complex subunit sigma.